The sequence spans 138 residues: Large ribosomal subunit protein uL14 (138 aa).

It belongs to the universal ribosomal protein uL14 family. Part of the 50S ribosomal subunit. Forms a cluster with proteins L3 and L24e, part of which may contact the 16S rRNA in 2 intersubunit bridges.

Functionally, binds to 23S rRNA. Forms part of two intersubunit bridges in the 70S ribosome. This is Large ribosomal subunit protein uL14 from Metallosphaera sedula (strain ATCC 51363 / DSM 5348 / JCM 9185 / NBRC 15509 / TH2).